The sequence spans 395 residues: Cysteine synthase 2 (395 aa).

Residues 6-22 (QDLASGIAMGAVFMYLL) form a helical membrane-spanning segment. N6-(pyridoxal phosphate)lysine is present on Lys-83. Pyridoxal 5'-phosphate is bound by residues 228-232 (GTGGT) and Ser-335.

This sequence belongs to the cysteine synthase/cystathionine beta-synthase family. Pyridoxal 5'-phosphate serves as cofactor.

The protein localises to the mitochondrion. The protein resides in the mitochondrion outer membrane. The catalysed reaction is O-acetyl-L-serine + hydrogen sulfide = L-cysteine + acetate. Functionally, putative cysteine synthase that catalyzes the conversion of O-acetyl-L-serine (OAS) into cysteine, the last step in the cysteine biosynthesis pathway. However, in contrast to cysteine synthase cys11, this CS-like protein seems not to function in cysteine biosynthesis, at least under normal growth conditions, although the transcript is produced. This Schizosaccharomyces pombe (strain 972 / ATCC 24843) (Fission yeast) protein is Cysteine synthase 2 (cys12).